Here is a 267-residue protein sequence, read N- to C-terminus: MAKTIFYFSYRKTEELHAKAKELKKITTDYGYELTDDYQKANVIISIGGDGAFLKSVRETGFRQDCLYAGIALTEQLGQYCDFHINQLDEIIKAAIEDRWLVRRYPTIYGTVNNTKAFYVLNEFNIRSSIIRTLTMDLYINDSHFETFRGDGMVISTPTGSTAYNKSVNGSIVDPLLPSMQVSELASINNNKFRTLGSSFILSPKRKLRIEIASEEGNNEFPMIGMDSEALSIQHVHEVNLEVGDRFINIIKLPKNSFWDKVKRNFL.

Asp50 serves as the catalytic Proton acceptor. Residues 50-51 (DG), Lys55, 122-123 (NE), Arg149, Asp151, 162-167 (TAYNKS), and Ala186 each bind NAD(+).

It belongs to the NAD kinase family. A divalent metal cation serves as cofactor.

The protein localises to the cytoplasm. It carries out the reaction NAD(+) + ATP = ADP + NADP(+) + H(+). Functionally, involved in the regulation of the intracellular balance of NAD and NADP, and is a key enzyme in the biosynthesis of NADP. Catalyzes specifically the phosphorylation on 2'-hydroxyl of the adenosine moiety of NAD to yield NADP. The polypeptide is NAD kinase 2 (Listeria monocytogenes serovar 1/2a (strain ATCC BAA-679 / EGD-e)).